The chain runs to 144 residues: Large ribosomal subunit protein uL13 (144 aa).

The protein belongs to the universal ribosomal protein uL13 family. Part of the 50S ribosomal subunit.

In terms of biological role, this protein is one of the early assembly proteins of the 50S ribosomal subunit, although it is not seen to bind rRNA by itself. It is important during the early stages of 50S assembly. The polypeptide is Large ribosomal subunit protein uL13 (Oleidesulfovibrio alaskensis (strain ATCC BAA-1058 / DSM 17464 / G20) (Desulfovibrio alaskensis)).